The primary structure comprises 101 residues: MDKSKQLFRKSKRSFRRRLPPIGSGDRIDYRNMSLISRFISEQGKILSRRVNRLTLKQQRLITIAIKQARILSSLPFLNNEKQFERTESIPRPTGPRSRNK.

Residues 1–19 show a composition bias toward basic residues; it reads MDKSKQLFRKSKRSFRRRL. A disordered region spans residues 1 to 23; it reads MDKSKQLFRKSKRSFRRRLPPIG.

It belongs to the bacterial ribosomal protein bS18 family. Part of the 30S ribosomal subunit.

It localises to the plastid. Its subcellular location is the chloroplast. This is Small ribosomal subunit protein bS18c from Acorus calamus (Sweet flag).